The primary structure comprises 184 residues: Leucine-rich repeat-containing protein 20 (184 aa).

LRR repeat units follow at residues 23 to 44 (GSDTLDLADCKLVSFPICIYKV), 51 to 72 (QIHLITLANNELKSLTSKFMTT), 75 to 96 (QLRELRLEGNYLFRLPNEVSSL), 98 to 120 (HLRAIDLSRNQFQDFPEQLTTLP), 121 to 141 (ALETINLEENEIVDVPVEKLA), and 145 to 167 (ALRVINLRLNPLSADVRVIAPPL). Serine 175 bears the Phosphoserine mark.

The protein is Leucine-rich repeat-containing protein 20 (Lrrc20) of Mus musculus (Mouse).